Consider the following 558-residue polypeptide: Atlastin-1 (558 aa).

Positions 1–27 (MAKNRRDRNSWGGFSEKTYEWSSEEEE) are disordered. Positions 1–34 (MAKNRRDRNSWGGFSEKTYEWSSEEEEPVKKAGP) are N-terminal hypervariable region (HVR). Residues 1–449 (MAKNRRDRNS…NIFHAARTPA (449 aa)) lie on the Cytoplasmic side of the membrane. Residues Ser10, Ser22, and Ser23 each carry the phosphoserine modification. A GB1/RHD3-type G domain is found at 64–309 (DKEVVAVSVA…LIPWLLSPES (246 aa)). GDP-binding residues include Arg77, Lys78, Gly79, Lys80, Ser81, Phe82, Gln148, Arg217, Asp218, Val276, and Asn279. GTP is bound by residues Arg77, Lys78, Gly79, Lys80, Ser81, and Phe82. Ser81 serves as a coordination point for Mg(2+). Residues Arg217, Asp218, and Val276 each contribute to the GTP site. The interval 347-438 (MLQATAEANN…YIQYIKHNDS (92 aa)) is 3HB (three-helix bundle) domain. An N6-acetyllysine modification is found at Lys395. Residues 412–439 (EFSRRYLQQLESEIDELYIQYIKHNDSK) are a coiled coil. The interval 439-447 (KNIFHAART) is linker. The chain crosses the membrane as a helical span at residues 450–470 (TLFVVIFITYVIAGVTGFIGL). Residue Asp471 is a topological domain, lumenal. The chain crosses the membrane as a helical span at residues 472–492 (IIASLCNMIMGLTLITLCTWA). Over 493–558 (YIRYSGEYRE…STEQSEKKKM (66 aa)) the chain is Cytoplasmic. The interval 521-558 (NEALYKLYSAAATHRHLYHQAFPTPKSESTEQSEKKKM) is autoinhibitory domain.

Belongs to the TRAFAC class dynamin-like GTPase superfamily. GB1/RHD3 GTPase family. GB1 subfamily. As to quaternary structure, monomeric and homodimeric. The homodimer, transiently formed by two molecules on opposing membranes, is the active form mediating ER membrane fusion. Interacts with REEP1, REEP5, RTN3 and RTN4 (via the transmembrane region); these proteins are involved in endoplasmic reticulum tubular network organization. Interacts with ZFYVE27; both proteins are involved in endoplasmic reticulum tubular network organization. Interacts with ARL6IP1; both proteins are involved in endoplasmic reticulum tubular network organization. Interacts with SPAST; the interaction is direct, could recruit SPAST to Golgi membranes. Interacts (via N-terminal region) with MAP4K4 (via CNH regulatory domain). May interact with TMED2. Interacts with CPT1C. Post-translationally, phosphorylated. Phosphorylation, by different kinases, of the N-terminal hypervariable region (HVR) regulates the ATL1-mediated membrane tethering step.

Its subcellular location is the endoplasmic reticulum membrane. It localises to the golgi apparatus membrane. It is found in the cell projection. The protein localises to the axon. It carries out the reaction GTP + H2O = GDP + phosphate + H(+). Atlastin-1 (ATL1) is a membrane-anchored GTPase that mediates the GTP-dependent fusion of endoplasmic reticulum (ER) membranes, maintaining the continuous ER network. It facilitates the formation of three-way junctions where ER tubules intersect. Two atlastin-1 on neighboring ER tubules bind GTP and form loose homodimers through the GB1/RHD3-type G domains and 3HB regions. Upon GTP hydrolysis, the 3HB regions tighten, pulling the membranes together to drive their fusion. After fusion, the homodimer disassembles upon release of inorganic phosphate (Pi). Subsequently, GDP dissociates, resetting the monomers to a conformation ready for a new fusion cycle. May also regulate more or less directly Golgi biogenesis. Indirectly regulates axonal development. This is Atlastin-1 from Pongo abelii (Sumatran orangutan).